Reading from the N-terminus, the 111-residue chain is uncharacterized protein (111 aa).

This is an uncharacterized protein from Microplitis demolitor bracovirus (isolate Webb) (MdBV).